A 232-amino-acid polypeptide reads, in one-letter code: MGQKVHPNGIRLGIVKAWNSTWYANTKEFADNLDSDFKVRQFLTKELAKASVSRIVIERPAKSIRVTIHTARPGIVIGKKGEDVEKLRKVVADIAGVPAQINIAEVRKPELDAKLVADSITSQLERRVMFRRAMKRAVQNAMRLGAKGIKVEVSGRLGGAEIARTEWYREGRVPLHTLRADIDYNTSEAHTTYGVIGVKVWIFKGEILGGMAAVEQPEPAAQPKKQQRKGRK.

The KH type-2 domain occupies 39 to 107 (VRQFLTKELA…PAQINIAEVR (69 aa)).

It belongs to the universal ribosomal protein uS3 family. Part of the 30S ribosomal subunit. Forms a tight complex with proteins S10 and S14.

Its function is as follows. Binds the lower part of the 30S subunit head. Binds mRNA in the 70S ribosome, positioning it for translation. This is Small ribosomal subunit protein uS3 from Yersinia pseudotuberculosis serotype O:1b (strain IP 31758).